A 187-amino-acid chain; its full sequence is GTP cyclohydrolase 1 (187 aa).

The Zn(2+) site is built by Cys-78, His-81, and Cys-150.

It belongs to the GTP cyclohydrolase I family. As to quaternary structure, homomer.

The enzyme catalyses GTP + H2O = 7,8-dihydroneopterin 3'-triphosphate + formate + H(+). It participates in cofactor biosynthesis; 7,8-dihydroneopterin triphosphate biosynthesis; 7,8-dihydroneopterin triphosphate from GTP: step 1/1. The polypeptide is GTP cyclohydrolase 1 (Brevibacillus brevis (strain 47 / JCM 6285 / NBRC 100599)).